Consider the following 501-residue polypeptide: Probable malate:quinone oxidoreductase (501 aa).

This sequence belongs to the MQO family. FAD serves as cofactor.

It carries out the reaction (S)-malate + a quinone = a quinol + oxaloacetate. It participates in carbohydrate metabolism; tricarboxylic acid cycle; oxaloacetate from (S)-malate (quinone route): step 1/1. The polypeptide is Probable malate:quinone oxidoreductase (Geobacillus kaustophilus (strain HTA426)).